We begin with the raw amino-acid sequence, 437 residues long: Transcription factor AP-2-alpha (437 aa).

Lys-10 is covalently cross-linked (Glycyl lysine isopeptide (Lys-Gly) (interchain with G-Cter in SUMO); alternate). A Glycyl lysine isopeptide (Lys-Gly) (interchain with G-Cter in SUMO2); alternate cross-link involves residue Lys-10. Residues 14–107 (CEDRHDGASN…GQRQSQESGL (94 aa)) form a disordered region. A PPxY motif motif is present at residues 57-62 (YFPPPY). Composition is skewed to low complexity over residues 65–74 (IYPQSQDPYS) and 88–101 (QPQPQHPGWPGQRQ). Glycyl lysine isopeptide (Lys-Gly) (interchain with G-Cter in SUMO2) cross-links involve residues Lys-177 and Lys-184. The residue at position 239 (Ser-239) is a Phosphoserine; by PKA. The H-S-H (helix-span-helix), dimerization stretch occupies residues 280–410 (RRKAANVTLL…YLTEALKAMD (131 aa)). Residues 414–427 (LSNNPNSHTDNNAK) are compositionally biased toward polar residues. A disordered region spans residues 414–437 (LSNNPNSHTDNNAKSSDKEEKHRK). Over residues 428–437 (SSDKEEKHRK) the composition is skewed to basic and acidic residues.

Belongs to the AP-2 family. In terms of assembly, binds DNA as a dimer. Can form homodimers or heterodimers with other AP-2 family members. Interacts with WWOX. Interacts with CITED4. Interacts with UBE2I. Interacts with RALBP1 in a complex also containing EPN1 and NUMB during interphase and mitosis. Interacts with KCTD1; this interaction represses transcription activation. Interacts (via C-terminus) with CITED2 (via C-terminus); the interaction stimulates TFAP2A-transcriptional activation. Interacts (via N-terminus) with EP300 (via N-terminus); the interaction requires CITED2. Interacts with KCTD15; this interaction inhibits TFAP2A transcriptional activation. In terms of processing, sumoylated on Lys-10; which inhibits transcriptional activity.

Its subcellular location is the nucleus. Sequence-specific DNA-binding protein that interacts with inducible viral and cellular enhancer elements to regulate transcription of selected genes. AP-2 factors bind to the consensus sequence 5'-GCCNNNGGC-3' and activate genes involved in a large spectrum of important biological functions including proper eye, face, body wall, limb and neural tube development. They also suppress a number of genes including MCAM/MUC18, C/EBP alpha and MYC. AP-2-alpha is the only AP-2 protein required for early morphogenesis of the lens vesicle. Together with the CITED2 coactivator, stimulates the PITX2 P1 promoter transcription activation. Associates with chromatin to the PITX2 P1 promoter region. The sequence is that of Transcription factor AP-2-alpha (TFAP2A) from Bos taurus (Bovine).